Here is a 245-residue protein sequence, read N- to C-terminus: tRNA pseudouridine synthase A (245 aa).

D52 acts as the Nucleophile in catalysis. Position 111 (Y111) interacts with substrate.

This sequence belongs to the tRNA pseudouridine synthase TruA family. As to quaternary structure, homodimer.

It catalyses the reaction uridine(38/39/40) in tRNA = pseudouridine(38/39/40) in tRNA. Formation of pseudouridine at positions 38, 39 and 40 in the anticodon stem and loop of transfer RNAs. This is tRNA pseudouridine synthase A from Bradyrhizobium diazoefficiens (strain JCM 10833 / BCRC 13528 / IAM 13628 / NBRC 14792 / USDA 110).